Reading from the N-terminus, the 437-residue chain is F-box only protein 9 (437 aa).

A disordered region spans residues 1–26 (MSAEAEEDCHSDADRVGDEGNESPAE). Position 2 is an N-acetylalanine (serine 2). Basic and acidic residues predominate over residues 8-26 (DCHSDADRVGDEGNESPAE). The residue at position 10 (histidine 10) is a Phosphoserine. One copy of the TPR repeat lies at 84–117 (ARELFLQAVEEEQNGALYEAIKFYRRAMQLVPDI). Serine 126 is subject to Phosphoserine. One can recognise an F-box domain in the interval 175–226 (QTHISVLPMEVLMYIFRWVVSSDLDLRSLEQLSLVCRGFYICARDPEIWRLA).

As to quaternary structure, part of the SCF (SKP1-CUL1-F-box) E3 ubiquitin-protein ligase complex SCF(FBXO9) composed of CUL1, SKP1, RBX1 and FBXO9. Interacts with TTI1 and TELO2; when TTI1 and TELO2 are phosphorylated by CK2.

The protein localises to the cytoplasm. Its pathway is protein modification; protein ubiquitination. In terms of biological role, substrate recognition component of a SCF (SKP1-CUL1-F-box protein) E3 ubiquitin-protein ligase complex which mediates the ubiquitination and subsequent proteasomal degradation of target proteins and plays a role in several biological processes such as cell cycle, cell proliferation, or maintenance of chromosome stability. Ubiquitinates mTORC1-bound TTI1 and TELO2 when they are phosphorylated by CK2 following growth factor deprivation, leading to their degradation. In contrast, does not mediate ubiquitination of TTI1 and TELO2 when they are part of the mTORC2 complex. As a consequence, mTORC1 is inactivated to restrain cell growth and protein translation, while mTORC2 is the activated due to the relief of feedback inhibition by mTORC1. Plays a role in maintaining epithelial cell survival by regulating the turn-over of chromatin modulator PRMT4 through ubiquitination and degradation by the proteasomal pathway. Also regulates PPARgamma stability by facilitating PPARgamma/PPARG ubiquitination and thereby plays a role in adipocyte differentiation. The protein is F-box only protein 9 (Fbxo9) of Mus musculus (Mouse).